A 278-amino-acid polypeptide reads, in one-letter code: HTH-type transcriptional activator RhaS (278 aa).

In terms of domain architecture, HTH araC/xylS-type spans 174–272; that stretch reads NLLLAWLEDH…NWSPRDIRQG (99 aa). 2 DNA-binding regions (H-T-H motif) span residues 191 to 212 and 239 to 262; these read DAVA…KQQT and VTDI…RREF.

Binds DNA as a dimer.

It is found in the cytoplasm. Its function is as follows. Activates expression of the rhaBAD and rhaT operons. This is HTH-type transcriptional activator RhaS from Escherichia coli O157:H7.